Consider the following 260-residue polypeptide: DNA-binding protein RFXANK (260 aa).

The tract at residues 1 to 79 (MELTQPAEDL…STTLTNRQRG (79 aa)) is disordered. Over residues 22–33 (GDPEDPGEEAAD) the composition is skewed to acidic residues. Positions 57-77 (SVSSPQAGSSLKHSTTLTNRQ) are enriched in polar residues. ANK repeat units lie at residues 89 to 118 (LDSL…NLVN), 123 to 152 (RGFT…DPHI), 156 to 185 (ERES…DINI), 189 to 218 (NGGT…DLTT), and 222 to 251 (SGYT…KLFQ).

In terms of assembly, forms homodimers. The RFX heterotetrameric complex consists of 2 molecules of RFX5 and one each of RFXAP and RFX-B/RFXANK; with each subunit representing a separate complementation group. Interacts (via ankyrin repeats) with RFX5 (via PxLPxI/L motif); the interaction is direct. RFX forms cooperative DNA binding complexes with X2BP and CBF/NF-Y. RFX associates with CIITA to form an active transcriptional complex. Interacts with RAF1. Interacts (via ankyrin repeats) with RFX7 (via PxLPxI/L motif). In terms of processing, phosphorylated by RAF1. As to expression, ubiquitous.

The protein resides in the cytoplasm. Its subcellular location is the nucleus. Its function is as follows. Activates transcription from class II MHC promoters. Activation requires the activity of the MHC class II transactivator/CIITA. May regulate other genes in the cell. RFX binds the X1 box of MHC-II promoters. May also potentiate the activation of RAF1. In terms of biological role, isoform 2 is not involved in the positive regulation of MHC class II genes. The sequence is that of DNA-binding protein RFXANK (RFXANK) from Homo sapiens (Human).